We begin with the raw amino-acid sequence, 700 residues long: Serine/threonine-protein kinase WNK1 (700 aa).

The 258-residue stretch at Gly-24–Leu-281 folds into the Protein kinase domain. ATP contacts are provided by residues Thr-104–Phe-107 and Lys-154. The Proton acceptor role is filled by Asp-171. Low complexity predominate over residues Asn-314–Asn-339. Disordered stretches follow at residues Asn-314–Gly-345, Glu-551–Tyr-575, and Glu-647–Gly-666. Positions Glu-551–Ser-565 are enriched in basic and acidic residues. Acidic residues predominate over residues Glu-566 to Tyr-575.

It belongs to the protein kinase superfamily. Ser/Thr protein kinase family. WNK subfamily. Autophosphorylated.

It catalyses the reaction L-seryl-[protein] + ATP = O-phospho-L-seryl-[protein] + ADP + H(+). The enzyme catalyses L-threonyl-[protein] + ATP = O-phospho-L-threonyl-[protein] + ADP + H(+). In terms of biological role, regulates flowering time by modulating the photoperiod pathway. Phosphorylates APRR3. The chain is Serine/threonine-protein kinase WNK1 (WNK1) from Arabidopsis thaliana (Mouse-ear cress).